The following is a 94-amino-acid chain: Aspartyl/glutamyl-tRNA(Asn/Gln) amidotransferase subunit C (94 aa).

Belongs to the GatC family. As to quaternary structure, heterotrimer of A, B and C subunits.

It catalyses the reaction L-glutamyl-tRNA(Gln) + L-glutamine + ATP + H2O = L-glutaminyl-tRNA(Gln) + L-glutamate + ADP + phosphate + H(+). The catalysed reaction is L-aspartyl-tRNA(Asn) + L-glutamine + ATP + H2O = L-asparaginyl-tRNA(Asn) + L-glutamate + ADP + phosphate + 2 H(+). Its function is as follows. Allows the formation of correctly charged Asn-tRNA(Asn) or Gln-tRNA(Gln) through the transamidation of misacylated Asp-tRNA(Asn) or Glu-tRNA(Gln) in organisms which lack either or both of asparaginyl-tRNA or glutaminyl-tRNA synthetases. The reaction takes place in the presence of glutamine and ATP through an activated phospho-Asp-tRNA(Asn) or phospho-Glu-tRNA(Gln). The sequence is that of Aspartyl/glutamyl-tRNA(Asn/Gln) amidotransferase subunit C from Hydrogenobaculum sp. (strain Y04AAS1).